Reading from the N-terminus, the 461-residue chain is Spermidine/putrescine import ATP-binding protein PotA (461 aa).

Residues 10–240 (IEVNGVSKFF…PINSFVADFI (231 aa)) form the ABC transporter domain. An ATP-binding site is contributed by 42–49 (GPSGCGKT).

It belongs to the ABC transporter superfamily. Spermidine/putrescine importer (TC 3.A.1.11.1) family. The complex is composed of two ATP-binding proteins (PotA), two transmembrane proteins (PotB and PotC) and a solute-binding protein (PotD).

The protein resides in the cell inner membrane. It catalyses the reaction ATP + H2O + polyamine-[polyamine-binding protein]Side 1 = ADP + phosphate + polyamineSide 2 + [polyamine-binding protein]Side 1.. Functionally, part of the ABC transporter complex PotABCD involved in spermidine/putrescine import. Responsible for energy coupling to the transport system. The protein is Spermidine/putrescine import ATP-binding protein PotA of Bacteroides fragilis (strain YCH46).